The chain runs to 493 residues: Galactose-1-phosphate uridylyltransferase (493 aa).

The protein belongs to the galactose-1-phosphate uridylyltransferase type 2 family.

It is found in the cytoplasm. It catalyses the reaction alpha-D-galactose 1-phosphate + UDP-alpha-D-glucose = alpha-D-glucose 1-phosphate + UDP-alpha-D-galactose. It functions in the pathway carbohydrate metabolism; galactose metabolism. The protein is Galactose-1-phosphate uridylyltransferase of Streptococcus pneumoniae (strain CGSP14).